The following is an 86-amino-acid chain: Hepcidin-1 (86 aa).

Positions 1–22 are cleaved as a signal peptide; that stretch reads MKAFSVAVVLVIACMFILESTA. A propeptide spanning residues 23–59 is cleaved from the precursor; the sequence is VPFSEVRTEEVGSFDSPVGEHQQPGGESMHLPEPFRF. 4 disulfide bridges follow: Cys-68/Cys-84, Cys-71/Cys-74, Cys-72/Cys-80, and Cys-75/Cys-83.

It belongs to the hepcidin family.

The protein localises to the secreted. Its function is as follows. Seems to act as a signaling molecule involved in the maintenance of iron homeostasis. Seems to be required in conjunction with HFE to regulate both intestinal iron absorption and iron storage in macrophages. May also have antimicrobial activity. The chain is Hepcidin-1 (hamp1) from Salmo salar (Atlantic salmon).